The primary structure comprises 410 residues: Protein king tubby 2 (410 aa).

Polar residues predominate over residues 48–72 (SPNNPDQILTSTGNASITTTPTSPY). Disordered stretches follow at residues 48–109 (SPNN…STRH) and 121–159 (ISPALMNNNGGSHHDSSSGKSVEHSSPQASGHNDTEGDV). The span at 132-143 (SHHDSSSGKSVE) shows a compositional bias: basic and acidic residues.

Belongs to the TUB family.

It localises to the cytoplasm. It is found in the nucleus. This is Protein king tubby 2 (king-tubby2) from Aedes aegypti (Yellowfever mosquito).